The chain runs to 503 residues: D-alanine--D-alanyl carrier protein ligase (503 aa).

151-152 provides a ligand contact to ATP; the sequence is TS. Aspartate 196 lines the D-alanine pocket. Residue 291–296 coordinates ATP; the sequence is NTYGPT. Valine 300 contacts D-alanine. ATP is bound by residues aspartate 382 and lysine 491. A D-alanine-binding site is contributed by lysine 491.

Belongs to the ATP-dependent AMP-binding enzyme family. DltA subfamily.

It is found in the cytoplasm. The catalysed reaction is holo-[D-alanyl-carrier protein] + D-alanine + ATP = D-alanyl-[D-alanyl-carrier protein] + AMP + diphosphate. It functions in the pathway cell wall biogenesis; lipoteichoic acid biosynthesis. Catalyzes the first step in the D-alanylation of lipoteichoic acid (LTA), the activation of D-alanine and its transfer onto the D-alanyl carrier protein (Dcp) DltC. In an ATP-dependent two-step reaction, forms a high energy D-alanyl-AMP intermediate, followed by transfer of the D-alanyl residue as a thiol ester to the phosphopantheinyl prosthetic group of the Dcp. D-alanylation of LTA plays an important role in modulating the properties of the cell wall in Gram-positive bacteria, influencing the net charge of the cell wall. This Bacillus velezensis (strain DSM 23117 / BGSC 10A6 / LMG 26770 / FZB42) (Bacillus amyloliquefaciens subsp. plantarum) protein is D-alanine--D-alanyl carrier protein ligase.